A 97-amino-acid chain; its full sequence is Co-chaperonin GroES (97 aa).

It belongs to the GroES chaperonin family. As to quaternary structure, heptamer of 7 subunits arranged in a ring. Interacts with the chaperonin GroEL.

The protein localises to the cytoplasm. In terms of biological role, together with the chaperonin GroEL, plays an essential role in assisting protein folding. The GroEL-GroES system forms a nano-cage that allows encapsulation of the non-native substrate proteins and provides a physical environment optimized to promote and accelerate protein folding. GroES binds to the apical surface of the GroEL ring, thereby capping the opening of the GroEL channel. The chain is Co-chaperonin GroES from Buchnera aphidicola subsp. Pemphigus spyrothecae.